The chain runs to 484 residues: Probable chitinase 2 (484 aa).

An N-terminal signal peptide occupies residues 1 to 33; the sequence is MTLRSRLSGEAPQLWLLLLLASTASSLWASVAA. Residues 41 to 432 form the GH18 domain; sequence KVVVCYVSTW…RTINEATMLA (392 aa). An intrachain disulfide couples Cys-45 to Cys-70. Residues 98–99 and 125–128 contribute to the chitin site; these read EE and GGWN. The Proton donor role is filled by Glu-168. Chitin contacts are provided by residues Tyr-169, 231–234, and Trp-384; that span reads MCYD. Ser-467 carries the post-translational modification Phosphoserine.

It belongs to the glycosyl hydrolase 18 family. Chitinase class II subfamily.

It carries out the reaction Random endo-hydrolysis of N-acetyl-beta-D-glucosaminide (1-&gt;4)-beta-linkages in chitin and chitodextrins.. This Drosophila melanogaster (Fruit fly) protein is Probable chitinase 2.